The following is a 152-amino-acid chain: Deoxyuridine 5'-triphosphate nucleotidohydrolase (152 aa).

Residues 71-73, Asn-84, 88-90, and Met-98 contribute to the substrate site; these read RSG and LID.

This sequence belongs to the dUTPase family. Homotrimer. Requires Mg(2+) as cofactor.

The catalysed reaction is dUTP + H2O = dUMP + diphosphate + H(+). Its pathway is pyrimidine metabolism; dUMP biosynthesis; dUMP from dCTP (dUTP route): step 2/2. Functionally, this enzyme is involved in nucleotide metabolism: it produces dUMP, the immediate precursor of thymidine nucleotides and it decreases the intracellular concentration of dUTP so that uracil cannot be incorporated into DNA. This is Deoxyuridine 5'-triphosphate nucleotidohydrolase from Escherichia coli O157:H7.